Reading from the N-terminus, the 398-residue chain is Yellow-related salivary protein SP04 (398 aa).

Residues 1 to 18 form the signal peptide; it reads MKWFLFLLSTIFVQGILG. Positions 73 to 94 are disordered; that stretch reads TLTEIERKKHPERSPPLSKFSG. Residues 75–85 are compositionally biased toward basic and acidic residues; the sequence is TEIERKKHPER.

Belongs to the major royal jelly protein family. Female salivary gland (at protein level).

It localises to the secreted. In terms of biological role, probably modulates blood feeding of sand flies on vertebrate species by binding and sequestering different mediators involved in the host response. Binds biogenic amines. Binds serotonin with high affinity. Binds histamine with low affinity. This is Yellow-related salivary protein SP04 from Phlebotomus argentipes (Phlebotomine sand fly).